A 65-amino-acid chain; its full sequence is MFTTKKSLLLLFFLGTINLSLCQEERNAEEERRDGDDEGGVEVQKRFFPFLLGALGSLLPKIFGK.

The N-terminal stretch at 1–22 is a signal peptide; sequence MFTTKKSLLLLFFLGTINLSLC. The propeptide at 23-44 is removed in mature form; the sequence is QEERNAEEERRDGDDEGGVEVQ. Lysine 65 carries the lysine amide modification.

Belongs to the frog skin active peptide (FSAP) family. Temporin subfamily. In terms of tissue distribution, expressed by the skin glands.

The protein resides in the secreted. Antimicrobial peptide. Active against a variety of Gram-positive bacterial strains. Not active against Gram-negative bacteria and against fungi. Shows hemolytic activity against human erythrocytes. This chain is Temporin-SN1, found in Sylvirana spinulosa (Fine-spined frog).